The following is a 311-amino-acid chain: 3-dehydro-scyllo-inosose hydrolase (311 aa).

Positions 35, 37, 46, 117, and 173 each coordinate Zn(2+).

It belongs to the creatininase superfamily. As to quaternary structure, homotrimer. It depends on Zn(2+) as a cofactor.

The enzyme catalyses 3-dehydro-scyllo-inosose + H2O = 5-dehydro-L-gluconate + H(+). Its pathway is polyol metabolism; myo-inositol metabolism. Catalyzes the ring-opening hydrolysis of 3-dehydro-scyllo-inosose (diketo-inositol) to 5-dehydro-L-gluconate, and thus probably functions in a myo-inositol degradation pathway together with IolG, IolM and IolO. This chain is 3-dehydro-scyllo-inosose hydrolase, found in Thermotoga maritima (strain ATCC 43589 / DSM 3109 / JCM 10099 / NBRC 100826 / MSB8).